The sequence spans 44 residues: uncharacterized protein (44 aa).

Residues 1 to 16 (MRISLLAVILALLFVA) form the signal peptide.

This is an uncharacterized protein from Helicobacter pylori (strain ATCC 700392 / 26695) (Campylobacter pylori).